The sequence spans 240 residues: Homeobox protein goosecoid (240 aa).

Residues 146–205 (KRRHRTIFTDEQLEALENLFQETKYPDVGTREQLARKVHLREEKVEVWFKNRRAKWRRQK) constitute a DNA-binding region (homeobox). Positions 199–240 (AKWRRQKRSSSEESENSQKWNKSTKTTSEKIEEGKSDVDSDS) are disordered. Basic and acidic residues predominate over residues 225–240 (TSEKIEEGKSDVDSDS).

It belongs to the paired homeobox family. Bicoid subfamily.

The protein localises to the nucleus. The chain is Homeobox protein goosecoid (gsc) from Danio rerio (Zebrafish).